A 264-amino-acid polypeptide reads, in one-letter code: SPRY domain-containing SOCS box protein 2 (264 aa).

Over residues 1-19 (MGQTALARGSSSTPTSQAL) the composition is skewed to polar residues. The segment at 1–34 (MGQTALARGSSSTPTSQALYSDFSPPEGLEELLS) is disordered. A B30.2/SPRY domain is found at 26-221 (PEGLEELLSA…VRIRYMGERR (196 aa)). The SOCS box domain maps to 222 to 264 (VEEPQSLLHLSRLCVRHALGDTRLGQISTLPLPPAMKRYLLYK).

This sequence belongs to the SPSB family. In terms of assembly, component of the probable ECS(SPSB2) E3 ubiquitin-protein ligase complex which contains CUL5, RNF7/RBX2, Elongin BC complex and SPSB2. Interacts with CUL5, RNF7, ELOB and ELOC. Interacts with MET. Interacts (via B30.2/SPRY domain) with PAWR; this interaction occurs in association with the Elongin BC complex. Interacts with NOS2.

It localises to the cytoplasm. The protein localises to the cytosol. The protein operates within protein modification; protein ubiquitination. Its function is as follows. Substrate recognition component of a SCF-like ECS (Elongin BC-CUL2/5-SOCS-box protein) E3 ubiquitin-protein ligase complex which mediates the ubiquitination and subsequent proteasomal degradation of target proteins. Negatively regulates nitric oxide (NO) production and limits cellular toxicity in activated macrophages by mediating the ubiquitination and proteasomal degradation of NOS2. Acts as a bridge which links NOS2 with the ECS E3 ubiquitin ligase complex components ELOC and CUL5. The chain is SPRY domain-containing SOCS box protein 2 (Spsb2) from Mus musculus (Mouse).